A 514-amino-acid chain; its full sequence is Peptide chain release factor 3 (514 aa).

In terms of domain architecture, tr-type G spans 8-268; it reads KKRRTFAIIS…TFLKFAPEPH (261 aa). GTP-binding positions include 17–24, 85–89, and 139–142; these read SHPDAGKT, DTPGH, and NKLD.

The protein belongs to the TRAFAC class translation factor GTPase superfamily. Classic translation factor GTPase family. PrfC subfamily.

The protein localises to the cytoplasm. Increases the formation of ribosomal termination complexes and stimulates activities of RF-1 and RF-2. It binds guanine nucleotides and has strong preference for UGA stop codons. It may interact directly with the ribosome. The stimulation of RF-1 and RF-2 is significantly reduced by GTP and GDP, but not by GMP. The polypeptide is Peptide chain release factor 3 (Streptococcus pneumoniae serotype 19F (strain G54)).